The following is a 213-amino-acid chain: Pyridoxine/pyridoxamine 5'-phosphate oxidase (213 aa).

FMN is bound by residues 57 to 62, 77 to 78, Arg-83, Lys-84, and Gln-106; these read RIVLLR and FT. Arg-62 provides a ligand contact to substrate. Substrate-binding residues include Tyr-124, Arg-128, and Ser-132. The disordered stretch occupies residues 135–163; it reads GARASDQSRPLPDRKTLQKRVEEEEARYP. 141–142 lines the FMN pocket; sequence QS. Positions 145–163 are enriched in basic and acidic residues; that stretch reads LPDRKTLQKRVEEEEARYP. Trp-186 provides a ligand contact to FMN. Position 192-194 (192-194) interacts with substrate; the sequence is RLH. An FMN-binding site is contributed by Arg-196.

Belongs to the pyridoxamine 5'-phosphate oxidase family. In terms of assembly, homodimer. It depends on FMN as a cofactor.

The catalysed reaction is pyridoxamine 5'-phosphate + O2 + H2O = pyridoxal 5'-phosphate + H2O2 + NH4(+). The enzyme catalyses pyridoxine 5'-phosphate + O2 = pyridoxal 5'-phosphate + H2O2. It functions in the pathway cofactor metabolism; pyridoxal 5'-phosphate salvage; pyridoxal 5'-phosphate from pyridoxamine 5'-phosphate: step 1/1. The protein operates within cofactor metabolism; pyridoxal 5'-phosphate salvage; pyridoxal 5'-phosphate from pyridoxine 5'-phosphate: step 1/1. Catalyzes the oxidation of either pyridoxine 5'-phosphate (PNP) or pyridoxamine 5'-phosphate (PMP) into pyridoxal 5'-phosphate (PLP). The polypeptide is Pyridoxine/pyridoxamine 5'-phosphate oxidase (Granulibacter bethesdensis (strain ATCC BAA-1260 / CGDNIH1)).